The primary structure comprises 130 residues: Small ribosomal subunit protein eS6 (130 aa).

The protein belongs to the eukaryotic ribosomal protein eS6 family.

The chain is Small ribosomal subunit protein eS6 from Methanosphaera stadtmanae (strain ATCC 43021 / DSM 3091 / JCM 11832 / MCB-3).